A 520-amino-acid chain; its full sequence is Nonsense-mediated mRNA decay factor SMG9 (520 aa).

Positions 1–143 are disordered; the sequence is MSESGHSQPG…KGEKEGQRPT (143 aa). An N-acetylserine modification is found at serine 2. Phosphoserine occurs at positions 2, 4, 7, 32, and 53. Over residues 36–53 the composition is skewed to basic and acidic residues; sequence GRERDYIAPWERERRDGS. Pro residues-rich tracts occupy residues 78–94 and 122–133; these read QPPP…PAPL and TAPPPPTAPAPP. Serine 451 carries the phosphoserine modification.

It belongs to the SMG9 family. Self-associates to form homodimers and forms heterodimers with SMG8; these assembly forms may represent SMG1C intermediate forms. Component of the SMG1C complex composed of SMG1, SMG8 and SMG9. Interacts with DHX34; the interaction is RNA-independent. Post-translationally, phosphorylated by SMG1.

Involved in nonsense-mediated decay (NMD) of mRNAs containing premature stop codons. Is recruited by release factors to stalled ribosomes together with SMG1 and SMG8 (forming the SMG1C protein kinase complex) and, in the SMG1C complex, is required for the efficient association between SMG1 and SMG8. Plays a role in brain, heart, and eye development. This Mus musculus (Mouse) protein is Nonsense-mediated mRNA decay factor SMG9.